A 303-amino-acid polypeptide reads, in one-letter code: MELRHLRYFVTVVEEQSISKAAEKLCIAQPPLSRQIQKLEEELGIQLFERGFRPAKVTEAGMFFYQHAVQILTHTAQASSMAKRIATVSQTLRIGYVSSLLYGLLPEIIYLFRQQNPEIHIELIECGTKDQINALKQGKIDLGFGRLKITDPAIRRIVLHKEQLKLAIHKHHHLNQFAATGVHLSQIIDEPMLLYPVSQKPNFATFIQSLFTELGLVPSKLTEIREIQLALGLVAAGEGVCIVPASAMDIGVKNLLYIPILDDDAYSPISLAVRNMDHSNYIPKILACVQEVFATHHIRPLIE.

Residues 1–58 (MELRHLRYFVTVVEEQSISKAAEKLCIAQPPLSRQIQKLEEELGIQLFERGFRPAKVT) form the HTH lysR-type domain. The H-T-H motif DNA-binding region spans 18 to 37 (ISKAAEKLCIAQPPLSRQIQ). Positions 99 and 128 each coordinate cis,cis-muconate.

The protein belongs to the LysR transcriptional regulatory family. As to quaternary structure, homotetramer in solution.

In terms of biological role, positively regulates the expression of catA, catBCIJFD and benPK in response to cis,cis-muconate. It binds to the catB-catM intercistronic region, to a specific sequence upstream of catA and to the benPK promoter region. Can also repress pca genes. This Acinetobacter baylyi (strain ATCC 33305 / BD413 / ADP1) protein is HTH-type transcriptional regulator CatM (catM).